A 427-amino-acid polypeptide reads, in one-letter code: 3-phosphoshikimate 1-carboxyvinyltransferase (427 aa).

3-phosphoshikimate is bound by residues Lys-22, Ser-23, and Arg-27. Lys-22 contacts phosphoenolpyruvate. Residues Gly-96 and Arg-124 each coordinate phosphoenolpyruvate. 3-phosphoshikimate contacts are provided by Ser-169, Ser-170, Gln-171, Ser-197, Asp-313, Asn-336, and Lys-340. Gln-171 is a binding site for phosphoenolpyruvate. Residue Asp-313 is the Proton acceptor of the active site. Phosphoenolpyruvate contacts are provided by Arg-344, Arg-386, and Lys-411.

This sequence belongs to the EPSP synthase family. As to quaternary structure, monomer.

The protein resides in the cytoplasm. It catalyses the reaction 3-phosphoshikimate + phosphoenolpyruvate = 5-O-(1-carboxyvinyl)-3-phosphoshikimate + phosphate. The protein operates within metabolic intermediate biosynthesis; chorismate biosynthesis; chorismate from D-erythrose 4-phosphate and phosphoenolpyruvate: step 6/7. Functionally, catalyzes the transfer of the enolpyruvyl moiety of phosphoenolpyruvate (PEP) to the 5-hydroxyl of shikimate-3-phosphate (S3P) to produce enolpyruvyl shikimate-3-phosphate and inorganic phosphate. This chain is 3-phosphoshikimate 1-carboxyvinyltransferase, found in Escherichia coli (strain SMS-3-5 / SECEC).